We begin with the raw amino-acid sequence, 61 residues long: L-amino-acid oxidase (61 aa).

Position 43–44 (43–44) interacts with FAD; sequence MA.

Belongs to the flavin monoamine oxidase family. FIG1 subfamily. In terms of assembly, homodimer; non-covalently linked. FAD serves as cofactor. N-glycosylated. In terms of tissue distribution, expressed by the venom gland.

It is found in the secreted. It carries out the reaction an L-alpha-amino acid + O2 + H2O = a 2-oxocarboxylate + H2O2 + NH4(+). The catalysed reaction is L-leucine + O2 + H2O = 4-methyl-2-oxopentanoate + H2O2 + NH4(+). Catalyzes an oxidative deamination of predominantly hydrophobic and aromatic L-amino acids, thus producing hydrogen peroxide that may contribute to the diverse toxic effects of this enzyme. Shows activity on L-Leu. Exhibits diverse biological activities, such as apoptosis, antibacterial activities against both Gram-negative and Gram-positive bacteria and antiparasitic activities, as well as induction of platelet aggregation. Effects of snake L-amino oxidases on platelets are controversial, since they either induce aggregation or inhibit agonist-induced aggregation. These different effects are probably due to different experimental conditions. This protein may also induce hemorrhage, hemolysis, and edema. The chain is L-amino-acid oxidase from Crotalus durissus cascavella (Northeastern Brazilian rattlesnake).